A 409-amino-acid chain; its full sequence is Indian hedgehog protein (409 aa).

The N-terminal stretch at 1–23 (MQLPKVVLLLCAAALLLSGAVRG) is a signal peptide. The N-palmitoyl cysteine moiety is linked to residue Cys-24. The Ca(2+) site is built by Glu-89, Glu-90, Asp-95, Thr-125, Glu-126, Asp-129, and Asp-131. The Zn(2+) site is built by His-140, Asp-147, and His-182. A lipid anchor (Cholesterol glycine ester) is attached at Gly-197.

The protein belongs to the hedgehog family. As to quaternary structure, multimer. Interacts with BOC and CDON. Interacts with PTCH1. Interacts with glypican GPC3. Post-translationally, cholesterylation is required for N-product targeting to lipid rafts and multimerization. In terms of processing, the C-terminal domain displays an autoproteolysis activity and a cholesterol transferase activity. Both activities result in the cleavage of the full-length protein and covalent attachment of a cholesterol moiety to the C-terminal of the newly generated N-product. The N-product is the active species in both local and long-range signaling, whereas the C-product is degraded in the endoplasmic reticulum. N-palmitoylation by HHAT of N-product is required for indian hedgehog protein N-product multimerization and full activity. In terms of tissue distribution, expressed in the marginal zone at early gastrulation. At stage 14, expression begins in the neural plate with expression becoming more prominent in the anterodorsal area at neural tube closure. At this stage, also expressed diffusely in the somitic and pre-somitic mesoderm. By the early tadpole (stages 28-30), expression is widespread throughout anterior structures with highest levels in the otic vesicle, the eye, and the branchial arches.

Its subcellular location is the cell membrane. It localises to the endoplasmic reticulum membrane. The protein localises to the golgi apparatus membrane. The protein resides in the secreted. The enzyme catalyses glycyl-L-cysteinyl-[protein] + cholesterol + H(+) = [protein]-C-terminal glycyl cholesterol ester + N-terminal L-cysteinyl-[protein]. Its function is as follows. Signal involved in the early induction and patterning of anterodorsal ectoderm, nervous system and somites. Induces ectopic cement gland formation in embryos. It is involved in the regulation of endochondral skeleton formation, and the development of retinal pigment epithelium (RPE), photoreceptors and periocular tissues. The C-terminal part of the indian hedgehog protein precursor displays an autoproteolysis and a cholesterol transferase activity. Both activities result in the cleavage of the full-length protein into two parts followed by the covalent attachment of a cholesterol moiety to the C-terminal of the newly generated N-product. Both activities occur in the endoplasmic reticulum. In terms of biological role, the dually lipidated indian hedgehog protein N-product is a morphogen which is essential for a variety of patterning events during development. Binds to the patched (PTCH1) receptor, which functions in association with smoothened (SMO), to activate the transcription of target genes. Signal involved in the early induction and patterning of anterodorsal ectoderm, nervous system and somites. Induces ectopic cement gland formation in embryos. This is Indian hedgehog protein from Xenopus laevis (African clawed frog).